A 246-amino-acid polypeptide reads, in one-letter code: Transmembrane protein 41 homolog (246 aa).

6 helical membrane-spanning segments follow: residues 12 to 32, 68 to 88, 101 to 123, 159 to 179, 182 to 202, and 219 to 239; these read WLVLLIFATFAVSIFAVYSNF, SVVLCGVIVVYVFLQSFAIPG, PFYVAIVLVCSCSATGAAICYTI, IFLRVTPIVPNWLINIASPVL, PLAPFFWGTFLGVAPPSFLYI, and SWSSIVLLTGSAILSLAPILL.

The protein belongs to the TMEM41 family.

The protein localises to the membrane. This chain is Transmembrane protein 41 homolog (tag-175), found in Caenorhabditis elegans.